The chain runs to 147 residues: D-aminoacyl-tRNA deacylase (147 aa).

The Gly-cisPro motif, important for rejection of L-amino acids motif lies at 136–137 (GP).

This sequence belongs to the DTD family. As to quaternary structure, homodimer.

The protein localises to the cytoplasm. The enzyme catalyses glycyl-tRNA(Ala) + H2O = tRNA(Ala) + glycine + H(+). It catalyses the reaction a D-aminoacyl-tRNA + H2O = a tRNA + a D-alpha-amino acid + H(+). An aminoacyl-tRNA editing enzyme that deacylates mischarged D-aminoacyl-tRNAs. Also deacylates mischarged glycyl-tRNA(Ala), protecting cells against glycine mischarging by AlaRS. Acts via tRNA-based rather than protein-based catalysis; rejects L-amino acids rather than detecting D-amino acids in the active site. By recycling D-aminoacyl-tRNA to D-amino acids and free tRNA molecules, this enzyme counteracts the toxicity associated with the formation of D-aminoacyl-tRNA entities in vivo and helps enforce protein L-homochirality. This is D-aminoacyl-tRNA deacylase from Streptococcus pyogenes serotype M1.